The chain runs to 145 residues: D-aminoacyl-tRNA deacylase (145 aa).

Residues 137-138 carry the Gly-cisPro motif, important for rejection of L-amino acids motif; sequence GP.

It belongs to the DTD family. In terms of assembly, homodimer.

The protein localises to the cytoplasm. The enzyme catalyses glycyl-tRNA(Ala) + H2O = tRNA(Ala) + glycine + H(+). It carries out the reaction a D-aminoacyl-tRNA + H2O = a tRNA + a D-alpha-amino acid + H(+). Its function is as follows. An aminoacyl-tRNA editing enzyme that deacylates mischarged D-aminoacyl-tRNAs. Also deacylates mischarged glycyl-tRNA(Ala), protecting cells against glycine mischarging by AlaRS. Acts via tRNA-based rather than protein-based catalysis; rejects L-amino acids rather than detecting D-amino acids in the active site. By recycling D-aminoacyl-tRNA to D-amino acids and free tRNA molecules, this enzyme counteracts the toxicity associated with the formation of D-aminoacyl-tRNA entities in vivo and helps enforce protein L-homochirality. This is D-aminoacyl-tRNA deacylase from Pseudomonas aeruginosa (strain LESB58).